The chain runs to 81 residues: Small ribosomal subunit protein bS16 (81 aa).

This sequence belongs to the bacterial ribosomal protein bS16 family.

The chain is Small ribosomal subunit protein bS16 from Neisseria meningitidis serogroup C (strain 053442).